Consider the following 603-residue polypeptide: Glutamyl-tRNA(Gln) amidotransferase subunit B, mitochondrial (603 aa).

Residues 1-32 (MIRHRLRLALSAAPVTATGRRTRSKTAPRRSL) constitute a mitochondrion transit peptide. Positions 12 to 59 (AAPVTATGRRTRSKTAPRRSLSTQQTQSSASSSSNNLDGDGRAFVPLR) are disordered. Residues 31 to 48 (SLSTQQTQSSASSSSNNL) are compositionally biased toward low complexity.

It belongs to the GatB/GatE family. GatB subfamily. Subunit of the heterotrimeric GatCAB amidotransferase (AdT) complex, composed of A, B and C subunits.

The protein resides in the mitochondrion. The catalysed reaction is L-glutamyl-tRNA(Gln) + L-glutamine + ATP + H2O = L-glutaminyl-tRNA(Gln) + L-glutamate + ADP + phosphate + H(+). Allows the formation of correctly charged Gln-tRNA(Gln) through the transamidation of misacylated Glu-tRNA(Gln) in the mitochondria. The reaction takes place in the presence of glutamine and ATP through an activated gamma-phospho-Glu-tRNA(Gln). The polypeptide is Glutamyl-tRNA(Gln) amidotransferase subunit B, mitochondrial (Arthroderma otae (strain ATCC MYA-4605 / CBS 113480) (Microsporum canis)).